The chain runs to 637 residues: Protein RRP6-like 1 (637 aa).

The 166-residue stretch at 118-283 folds into the 3'-5' exonuclease domain; the sequence is VEEVKDLEDL…YIYDVMRMEL (166 aa). The HRDC domain maps to 334 to 414; it reads NAVQLSIVAG…RRSMQNAAAF (81 aa). Residues 553-565 show a composition bias toward acidic residues; sequence VDDDDDDDDDESY. Residues 553–624 are disordered; that stretch reads VDDDDDDDDD…EDMRRRSEKH (72 aa). Polar residues predominate over residues 580-598; the sequence is ETPSKGSPSLTQKPKTCNT. Positions 602 to 614 are enriched in acidic residues; sequence VLDDDDDSESRED.

Its subcellular location is the nucleus. The protein localises to the nucleoplasm. In terms of biological role, acts as an important epigenetic regulator through multiple silencing mechanisms. Involved in transcriptional gene silencing (TGS). Plays a role for DNA methylation in the RNA-directed DNA methylation (RdDM) pathway. Contributes to the methylation status of the retrotransposon SN1. Required for DNA methylation only at a subset of RdDM target loci. Plays a regulatory role in RdDM through retention of non-coding RNAs (ncRNAs) in normal cells. Helps to retain Pol V-transcribed RNAs in chromatin to enable their scaffold function and is required for genome-wide Pol IV-dependent siRNA (24 nt siRNA) production that may involve retention of Pol IV transcripts. Involved in association with RRP6L2 in the silencing of the solo LTR locus. Controls levels of ncRNAs from the solo LTR locus. Seems to function independently of the RdDM pathway. Functions redundantly with RRP6L2 in the regulation of FLC locus. Participates in the maintenance of trimethylated 'Lys-27' (H3K27me3) at FLC locus via the regulation of antisense long non-coding RNAs (lncRNAs) and the regulation of diverse antisense RNAs derived from the FLC locus. Seems not involved in the exosomal RNA degradation. Can complement the growth defect of a yeast mutant lacking RRP6 exonuclease. This is Protein RRP6-like 1 from Arabidopsis thaliana (Mouse-ear cress).